The primary structure comprises 784 residues: Transcription factor E4F1 (784 aa).

The segment at Gly-41–Ala-85 is required for ubiquitin ligase activity. Position 50 is a phosphoserine (Ser-50). Residues Leu-184–Leu-263 form a mediates dimerization, DNA-binding, transcription repression of CCNA2 and interaction with HMGA2 region. 2 C2H2-type zinc fingers span residues Tyr-192–His-214 and His-220–His-242. The segment at Tyr-248–Pro-272 adopts a C2H2-type 3; degenerate zinc-finger fold. A mediates interaction with CDKN2A region spans residues Asn-369–Val-566. C2H2-type zinc fingers lie at residues His-435 to His-457, Phe-463 to His-485, Phe-491 to His-513, Tyr-519 to His-541, and His-547 to His-569. Positions His-435–Gly-599 are interaction with BMI1. Positions Cys-521 to Cys-580 are mediates interaction with TP53. The C2H2-type 9; degenerate zinc-finger motif lies at Phe-575–Lys-597. The tract at residues Phe-575 to Lys-597 is mediates interaction with RASSF1.

In terms of assembly, homodimer; binds DNA as a dimer. Forms a complex with CDKN2A and TP53. Interactions with TP53, RB1, ANP32A, BMI1 and FHL2 regulate E4F1 activity. Interacts with HDAC1, HMGA2 and RASSF1. (Microbial infection) Interacts with HBV protein X. In terms of processing, proteolytic cleavage produces a 50 kDa N-terminal peptide (p50E4F) which has a DNA-binding activity and activates transcription in presence of the adenoviral E1A protein. The major full-length protein (p120E4F) functions as a repressor of transcription. Phosphorylated; p120E4F and p50E4F are both phosphorylated. Phosphorylation is cell cycle-dependent and differentially regulates DNA-binding activity and function of both forms. Post-translationally, may be sumoylated by UBE2I upon interaction with CDKN2A. Ubiquitously expressed.

It localises to the nucleus. The protein localises to the nucleoplasm. Its subcellular location is the cytoplasm. The catalysed reaction is S-ubiquitinyl-[E2 ubiquitin-conjugating enzyme]-L-cysteine + [acceptor protein]-L-lysine = [E2 ubiquitin-conjugating enzyme]-L-cysteine + N(6)-ubiquitinyl-[acceptor protein]-L-lysine.. It participates in protein modification; protein ubiquitination. Functionally, may function as a transcriptional repressor. May also function as a ubiquitin ligase mediating ubiquitination of chromatin-associated TP53. Functions in cell survival and proliferation through control of the cell cycle. Functions in the p53 and pRB tumor suppressor pathways and regulates the cyclin CCNA2 transcription. In terms of biological role, identified as a cellular target of the adenoviral oncoprotein E1A, it is required for both transcriptional activation and repression of viral genes. The sequence is that of Transcription factor E4F1 (E4F1) from Homo sapiens (Human).